Here is a 513-residue protein sequence, read N- to C-terminus: Zinc finger CCCH-type with G patch domain-containing protein (513 aa).

Residues 155-178 (PCSYYLEGECRFDEAKCRFSHGAL) form a C3H1-type zinc finger. Over residues 252–261 (DQDEDDELSS) the composition is skewed to acidic residues. The segment at 252–283 (DQDEDDELSSEESNSSMNDNSSDEAESDMDDL) is disordered. The span at 262-271 (EESNSSMNDN) shows a compositional bias: low complexity. Residues 272 to 283 (SSDEAESDMDDL) show a composition bias toward acidic residues. A G-patch domain is found at 312–358 (TRGIGSKLMEKMGYIHGTGLGSDGRGIVTPVSAQILPQGRSLDACME). The segment covering 478–495 (VQMQSHKQELATLQAQER) has biased composition (polar residues). A disordered region spans residues 478–513 (VQMQSHKQELATLQAQERSLSKEQQTRKSKNKMFEF). The span at 496–513 (SLSKEQQTRKSKNKMFEF) shows a compositional bias: basic and acidic residues.

It localises to the nucleus. Functionally, transcription repressor. The chain is Zinc finger CCCH-type with G patch domain-containing protein from Drosophila melanogaster (Fruit fly).